The chain runs to 465 residues: Mothers against decapentaplegic homolog 5 (465 aa).

Residue Thr2 is modified to N-acetylthreonine. The region spanning 13–137 (PAVKRLLGWK…YKRVESPVLP (125 aa)) is the MH1 domain. 4 residues coordinate Zn(2+): Cys65, Cys110, Cys122, and His127. A disordered region spans residues 163 to 251 (NEPHMPQNAT…DTSSNMIPQT (89 aa)). Residues 169-182 (QNATFPDSFHQPNN) show a composition bias toward polar residues. Residues 186-197 (PLSPNSPYPPSP) are compositionally biased toward pro residues. Residues 198–214 (ASSTYPNSPASSGPGSP) show a composition bias toward low complexity. The segment covering 237-251 (NSQPMDTSSNMIPQT) has biased composition (polar residues). The 195-residue stretch at 271–465 (WCSIVYYELN…SPLNPISSVS (195 aa)) folds into the MH2 domain. Phosphoserine occurs at positions 463 and 465.

The protein belongs to the dwarfin/SMAD family. In terms of assembly, homodimer. Forms trimers with the co-SMAD SMAD4. Interacts with PEBP2-alpha subunit and SMURF1. Interacts with SUV39H1 and SUV39H2. Interacts (via MH2 domain) with LEMD3. Interacts with WWP1. Interacts with TMEM119. Interacts with ZNF8. Interacts with RANBP3L. Interacts with HK1. Interacts with HGS; this interaction attenuates BMP signaling. Phosphorylated on serine by BMP (bone morphogenetic proteins) type 1 receptor kinase. In terms of processing, ubiquitin-mediated proteolysis by SMAD-specific E3 ubiquitin ligase SMURF1. As to expression, predominantly expressed in mesenchyme and somites during embryogenesis, and present in many tissues of the adult.

The protein resides in the cytoplasm. It localises to the nucleus. It is found in the mitochondrion. Functionally, transcriptional regulator that plays a role in various cellular processes including embryonic development, cell differentiation, angiogenesis and tissue homeostasis. Upon BMP ligand binding to their receptors at the cell surface, is phosphorylated by activated type I BMP receptors (BMPRIs) and associates with SMAD4 to form a heteromeric complex which translocates into the nucleus acting as transcription factor. In turn, the hetero-trimeric complex recognizes cis-regulatory elements containing Smad Binding Elements (SBEs) to modulate the outcome of the signaling network. Non-phosphorylated SMAD5 has a cytoplasmic role in energy metabolism regulation by promoting mitochondrial respiration and glycolysis in response to cytoplasmic pH changes. Mechanistically, interacts with hexokinase 1/HK1 and thereby accelerates glycolysis. The protein is Mothers against decapentaplegic homolog 5 (Smad5) of Mus musculus (Mouse).